The primary structure comprises 105 residues: Unclassified hydrophobin D (105 aa).

The signal sequence occupies residues 1–18 (MKFYIVLLALAAFAMAEA). 3 cysteine pairs are disulfide-bonded: Cys35-Cys86, Cys42-Cys83, and Cys43-Cys49.

The protein localises to the secreted. It is found in the cell wall. Aerial growth, conidiation, and dispersal of filamentous fungi in the environment rely upon a capability of their secreting small amphipathic proteins called hydrophobins (HPBs) with low sequence identity. Class I can self-assemble into an outermost layer of rodlet bundles on aerial cell surfaces, conferring cellular hydrophobicity that supports fungal growth, development and dispersal; whereas Class II form highly ordered films at water-air interfaces through intermolecular interactions but contribute nothing to the rodlet structure. In P.expansum, hydrophobins contribute to germination, tolerance to cold stress and mycotoxins patulin and citrinin production. The protein is Unclassified hydrophobin D of Penicillium expansum (Blue mold rot fungus).